We begin with the raw amino-acid sequence, 434 residues long: Cytochrome b-c1 complex subunit 2, mitochondrial (434 aa).

A mitochondrion-targeting transit peptide spans Met-1–Gly-31.

This sequence belongs to the peptidase M16 family. UQCRC2/QCR2 subfamily. Component of the ubiquinol-cytochrome c oxidoreductase (cytochrome b-c1 complex, complex III, CIII), a multisubunit enzyme composed of 10 subunits. The complex is composed of 3 respiratory subunits cytochrome b (COB), cytochrome c1 (CYT1) and Rieske protein (RIP1), 2 core protein subunits COR1 and QCR2, and 5 low-molecular weight protein subunits QCR6, QCR7, QCR8, QCR9 and QCR10. The complex exists as an obligatory dimer and forms supercomplexes (SCs) in the inner mitochondrial membrane with a monomer or a dimer of cytochrome c oxidase (complex IV, CIV), resulting in 2 different assemblies (supercomplexes III(2)IV and III(2)IV(2)). Interacts with MRJ1.

The protein resides in the mitochondrion inner membrane. Functionally, component of the ubiquinol-cytochrome c oxidoreductase, a multisubunit transmembrane complex that is part of the mitochondrial electron transport chain which drives oxidative phosphorylation. The respiratory chain contains 3 multisubunit complexes succinate dehydrogenase (complex II, CII), ubiquinol-cytochrome c oxidoreductase (cytochrome b-c1 complex, complex III, CIII) and cytochrome c oxidase (complex IV, CIV), that cooperate to transfer electrons derived from NADH and succinate to molecular oxygen, creating an electrochemical gradient over the inner membrane that drives transmembrane transport and the ATP synthase. The cytochrome b-c1 complex catalyzes electron transfer from ubiquinol to cytochrome c, linking this redox reaction to translocation of protons across the mitochondrial inner membrane, with protons being carried across the membrane as hydrogens on the quinol. In the process called Q cycle, 2 protons are consumed from the matrix, 4 protons are released into the intermembrane space and 2 electrons are passed to cytochrome c. The polypeptide is Cytochrome b-c1 complex subunit 2, mitochondrial (Cryptococcus neoformans var. grubii serotype A (strain H99 / ATCC 208821 / CBS 10515 / FGSC 9487) (Filobasidiella neoformans var. grubii)).